We begin with the raw amino-acid sequence, 394 residues long: Phosphoglycerate kinase (394 aa).

Residues 21–23, arginine 37, 60–63, arginine 115, and arginine 148 contribute to the substrate site; these read DLN and HLGR. ATP-binding positions include lysine 199, glutamate 321, and 347 to 350; that span reads GGDT.

The protein belongs to the phosphoglycerate kinase family. As to quaternary structure, monomer.

It is found in the cytoplasm. It catalyses the reaction (2R)-3-phosphoglycerate + ATP = (2R)-3-phospho-glyceroyl phosphate + ADP. Its pathway is carbohydrate degradation; glycolysis; pyruvate from D-glyceraldehyde 3-phosphate: step 2/5. In Azoarcus sp. (strain BH72), this protein is Phosphoglycerate kinase.